Reading from the N-terminus, the 180-residue chain is Large ribosomal subunit protein uL5 (180 aa).

This sequence belongs to the universal ribosomal protein uL5 family. Part of the 50S ribosomal subunit; part of the 5S rRNA/L5/L18/L25 subcomplex. Contacts the 5S rRNA and the P site tRNA. Forms a bridge to the 30S subunit in the 70S ribosome.

This is one of the proteins that bind and probably mediate the attachment of the 5S RNA into the large ribosomal subunit, where it forms part of the central protuberance. In the 70S ribosome it contacts protein S13 of the 30S subunit (bridge B1b), connecting the 2 subunits; this bridge is implicated in subunit movement. Contacts the P site tRNA; the 5S rRNA and some of its associated proteins might help stabilize positioning of ribosome-bound tRNAs. The polypeptide is Large ribosomal subunit protein uL5 (Solibacter usitatus (strain Ellin6076)).